A 20-amino-acid polypeptide reads, in one-letter code: Elastase (20 aa).

A Peptidase S1 domain is found at 1 to 20; that stretch reads VVGGEVARAHSWPWQISLQY.

Belongs to the peptidase S1 family. Elastase subfamily.

Its function is as follows. Digests most rapidly at the C-terminal side of alanine residues, but also cleaves at valine and leucine residues. In Gadus morhua (Atlantic cod), this protein is Elastase.